The chain runs to 161 residues: Heme transporter hrg-6 (161 aa).

A run of 4 helical transmembrane segments spans residues 13–33, 38–58, 75–95, and 115–135; these read IAYTICGIIIGLFWACVYIFA, VALAACLTATAFAFETFYFYL, VLFWINLIVGFLSIGGMITAI, and WWSTATWFLVMLKWTWQNAFI.

Belongs to the HRG family.

The protein resides in the membrane. Its function is as follows. Heme transporter. The polypeptide is Heme transporter hrg-6 (hrg-6) (Caenorhabditis elegans).